Consider the following 276-residue polypeptide: Imidazole glycerol phosphate synthase subunit HisF (276 aa).

Catalysis depends on residues D11 and D130.

It belongs to the HisA/HisF family. As to quaternary structure, heterodimer of HisH and HisF.

It is found in the cytoplasm. It carries out the reaction 5-[(5-phospho-1-deoxy-D-ribulos-1-ylimino)methylamino]-1-(5-phospho-beta-D-ribosyl)imidazole-4-carboxamide + L-glutamine = D-erythro-1-(imidazol-4-yl)glycerol 3-phosphate + 5-amino-1-(5-phospho-beta-D-ribosyl)imidazole-4-carboxamide + L-glutamate + H(+). Its pathway is amino-acid biosynthesis; L-histidine biosynthesis; L-histidine from 5-phospho-alpha-D-ribose 1-diphosphate: step 5/9. Functionally, IGPS catalyzes the conversion of PRFAR and glutamine to IGP, AICAR and glutamate. The HisF subunit catalyzes the cyclization activity that produces IGP and AICAR from PRFAR using the ammonia provided by the HisH subunit. This chain is Imidazole glycerol phosphate synthase subunit HisF, found in Beijerinckia indica subsp. indica (strain ATCC 9039 / DSM 1715 / NCIMB 8712).